The following is a 463-amino-acid chain: Phosphoglucosamine mutase (463 aa).

Ser102 serves as the catalytic Phosphoserine intermediate. Mg(2+)-binding residues include Ser102, Asp240, Asp242, and Asp244. Ser102 bears the Phosphoserine mark.

Belongs to the phosphohexose mutase family. The cofactor is Mg(2+). Activated by phosphorylation.

It catalyses the reaction alpha-D-glucosamine 1-phosphate = D-glucosamine 6-phosphate. In terms of biological role, catalyzes the conversion of glucosamine-6-phosphate to glucosamine-1-phosphate. This Mycobacterium leprae (strain Br4923) protein is Phosphoglucosamine mutase.